The primary structure comprises 129 residues: Small ribosomal subunit protein uS11 (129 aa).

This sequence belongs to the universal ribosomal protein uS11 family. Part of the 30S ribosomal subunit. Interacts with proteins S7 and S18. Binds to IF-3.

Located on the platform of the 30S subunit, it bridges several disparate RNA helices of the 16S rRNA. Forms part of the Shine-Dalgarno cleft in the 70S ribosome. This is Small ribosomal subunit protein uS11 from Pasteurella multocida (strain Pm70).